Consider the following 445-residue polypeptide: Phosphoglucosamine mutase (445 aa).

Ser-102 serves as the catalytic Phosphoserine intermediate. The Mg(2+) site is built by Ser-102, Asp-241, Asp-243, and Asp-245. Ser-102 is subject to Phosphoserine.

This sequence belongs to the phosphohexose mutase family. The cofactor is Mg(2+). In terms of processing, activated by phosphorylation.

The enzyme catalyses alpha-D-glucosamine 1-phosphate = D-glucosamine 6-phosphate. Catalyzes the conversion of glucosamine-6-phosphate to glucosamine-1-phosphate. The polypeptide is Phosphoglucosamine mutase (Klebsiella pneumoniae (strain 342)).